The chain runs to 217 residues: MKFFLDTANTEDIKHFAELGLVDGVTTNPTLVSREGRDFETVIKEITQIVSGPVSAEVTATKAEEMIAQARNEIKWASNIVVKIPMTEEGLKAVKVLSGEGIKTNVTLVFSVSQGLLAAKAGATYISPFLGRLDDIGGNGIQLVKDLRQVLDTYGFKTEIIAASVRGPQHVQEAALAGADIATIPATVFGKLWSHPLTDKGLASFASDWKAFQATQK.

Residue Lys-83 is the Schiff-base intermediate with substrate of the active site.

It belongs to the transaldolase family. Type 3B subfamily.

It is found in the cytoplasm. It carries out the reaction D-sedoheptulose 7-phosphate + D-glyceraldehyde 3-phosphate = D-erythrose 4-phosphate + beta-D-fructose 6-phosphate. It participates in carbohydrate degradation; pentose phosphate pathway; D-glyceraldehyde 3-phosphate and beta-D-fructose 6-phosphate from D-ribose 5-phosphate and D-xylulose 5-phosphate (non-oxidative stage): step 2/3. Its function is as follows. Transaldolase is important for the balance of metabolites in the pentose-phosphate pathway. The polypeptide is Probable transaldolase (Lactiplantibacillus plantarum (strain ATCC BAA-793 / NCIMB 8826 / WCFS1) (Lactobacillus plantarum)).